Consider the following 379-residue polypeptide: tRNA-specific 2-thiouridylase MnmA (379 aa).

ATP contacts are provided by residues 6–13 (AMSGGVDS) and leucine 32. The Nucleophile role is filled by cysteine 101. The cysteines at positions 101 and 199 are disulfide-linked. Glycine 125 lines the ATP pocket. Residues 148–150 (KDQ) are interaction with tRNA. Cysteine 199 acts as the Cysteine persulfide intermediate in catalysis.

It belongs to the MnmA/TRMU family.

It localises to the cytoplasm. It carries out the reaction S-sulfanyl-L-cysteinyl-[protein] + uridine(34) in tRNA + AH2 + ATP = 2-thiouridine(34) in tRNA + L-cysteinyl-[protein] + A + AMP + diphosphate + H(+). Catalyzes the 2-thiolation of uridine at the wobble position (U34) of tRNA, leading to the formation of s(2)U34. The protein is tRNA-specific 2-thiouridylase MnmA of Paenarthrobacter aurescens (strain TC1).